Reading from the N-terminus, the 1373-residue chain is MVQLTKQFGKIKVEVPIPHLLNLQVDSYKKFLQEGLLEPLPEEGLESVFRSVFPIEDFNRTSSLEFVNYKIGEPKYDQAECIAKGLTYEAPIRIKVRLIIYDVDSDTESRTVHDIKEQDIYFGTLPLMTEKGTFIINGTERVIVNQLQRSPGIIFEHDSGKTHASRKVLYSCRIIPMRGSWLDFDFDHKDILYVRIDRRRKMPATILLKAMGMGKQDILNFFYKKETYILDNDGRIKWKFDPSLFRKDIAYTDILDNDNNLLVAAGKTITKRVWRQMEASGLEAFEVDPSTVIGQFLAEDIIDTSTGEILAESAEEITEGLIQTFRDAGITTFTVLHTRGNDTSSSIRDTLVQDKIPTTEKAQEEIYRRLRPSSPPTPEIAASFFDNLFRNNSYYDLSPVGRYKLNQRLDNYENATLRTLSDNDILEAIKLLTHLKDSHGPADDIDHLGNRRVRLVGELVENQYRIGLVRMERAIKERMSIQEVATLMPHDLINPKPVAALLKEFFGTSQLSQFMDQTNSLSEVTHKRRLSALGPGGLTRERAGFEVRDVHVSHYGRICPIETPEGPNIGLIVSLTTYAKVNDYGFIETPYRVVRNGYVTDEIIHLDASCEFSEVIAQANASIDSEGRLIDDYVTTRARGDVLMSAREEVTLMDISPSQMVSISAALIPFLEHDDANRALMGSNMQRQAVPLLRSERPLVGTGMEVDVAHDSGSCILAEGDGIIRYADANRIIVSYDDPNLYPEFGGVRAYDLLKYHKSNQNFCFGQRPSCIPGQIVKKGEVLADGPAIRDGGLALGKNLVVAFMPWCGYNFEDSILISERVVKEDTYTSVHIEEFEIVARDTKLGPEEITRDIPNVGEEMLSNLDENGIIRIGAAVKPEDILVGKITPKGETQLTPEEKLLRAIFGDKARDVKNTSLKVPPGIEGTVIDVKVFNRRSGEKDDRTRLIEDYEISLMDSKEQNYIKSITQRMKEKILPLINGKQLGTTILGKGKGEVLAEENSAITPELLDSLPLKKLEGAFKSKELNETITEMLSQYEKQINYIKTIYDSKRGKVTEGDDLPPGVIRMVKVHIAVKRKLAVGDKMAGRHGNKGVVSCILPEEDMPFFADGSPVDIVLNPLGVPSRMNIGQIMETHLGWAAKELGQQLNNMVEQGVAIQSLREQVKSVFESPEISAEIDAMDDDTFRTSVQKLKKGIITMTPVFDGAGESEVWDWLAKAGLPSDGKAILYDGRTGEAFKNRVTTGVMYILKLHHLVDEKIHARSTGPYSLVTQQPLGGKAQFGGQRLGEMEVWALEAYGASYLLQEFLTVKSDDVSGRVKMYEKIVKGDNFLEAGLPESFNVLVKELMSLGLNVTLHQEEGKKKPKRTGLIDKE.

This sequence belongs to the RNA polymerase beta chain family. The RNAP catalytic core consists of 2 alpha, 1 beta, 1 beta' and 1 omega subunit. When a sigma factor is associated with the core the holoenzyme is formed, which can initiate transcription.

The enzyme catalyses RNA(n) + a ribonucleoside 5'-triphosphate = RNA(n+1) + diphosphate. DNA-dependent RNA polymerase catalyzes the transcription of DNA into RNA using the four ribonucleoside triphosphates as substrates. This is DNA-directed RNA polymerase subunit beta from Lawsonia intracellularis (strain PHE/MN1-00).